We begin with the raw amino-acid sequence, 74 residues long: High-potential iron-sulfur protein isozyme 2 (74 aa).

The [4Fe-4S] cluster site is built by C36, C39, C53, and C67.

Homodimer.

Specific class of high-redox-potential 4Fe-4S ferredoxins. Functions in anaerobic electron transport in most purple and in some other photosynthetic bacteria and in at least one genus (Paracoccus) of halophilic, denitrifying bacteria. This Ectothiorhodospira mobilis protein is High-potential iron-sulfur protein isozyme 2.